A 287-amino-acid chain; its full sequence is Nucleotide-binding protein Gbem_0872 (287 aa).

8–15 provides a ligand contact to ATP; it reads GLSGSGKS. 59–62 serves as a coordination point for GTP; that stretch reads DIRS.

Belongs to the RapZ-like family.

In terms of biological role, displays ATPase and GTPase activities. This is Nucleotide-binding protein Gbem_0872 from Citrifermentans bemidjiense (strain ATCC BAA-1014 / DSM 16622 / JCM 12645 / Bem) (Geobacter bemidjiensis).